A 462-amino-acid chain; its full sequence is Retinoic acid receptor RXR-alpha (462 aa).

Residues 1 to 107 (MDTKHFLPLD…MNPVSSSEDI (107 aa)) form a disordered region. The interval 1 to 134 (MDTKHFLPLD…GNMASFTKHI (134 aa)) is modulating. A Glycyl lysine isopeptide (Lys-Gly) (interchain with G-Cter in SUMO2) cross-link involves residue lysine 4. Over residues 11-24 (FSTQVNSSLTSPTG) the composition is skewed to polar residues. A phosphoserine mark is found at serine 21 and serine 27. The segment covering 49–58 (SPISTLSSPI) has biased composition (polar residues). A phosphoserine; by MAPK8 and MAPK9 mark is found at serine 56 and serine 70. Polar residues predominate over residues 78-104 (SVPTTPTLGFSTGSPQLSSPMNPVSSS). Threonine 82 is subject to Phosphothreonine; by MAPK8 and MAPK9. A Glycyl lysine isopeptide (Lys-Gly) (interchain with G-Cter in SUMO) cross-link involves residue lysine 108. Serine 129 bears the Phosphoserine mark. Zn(2+) contacts are provided by cysteine 135 and cysteine 138. An NR C4-type zinc finger spans residues 135–155 (CAICGDRSSGKHYGVYSCEGC). Residues 135–200 (CAICGDRSSG…RYQKCLAMGM (66 aa)) constitute a DNA-binding region (nuclear receptor). The residue at position 145 (lysine 145) is an N6-acetyllysine; by EP300. Residues cysteine 152 and cysteine 155 each contribute to the Zn(2+) site. Residues 160–165 (KRTVRK) are nuclear localization signal. Positions 171, 177, 187, and 190 each coordinate Zn(2+). An NR C4-type zinc finger spans residues 171-195 (CRDNKDCLIDKRQRNRCQYCRYQKC). The tract at residues 201–224 (KREAVQEERQRGKDRNENEVESTS) is hinge. Residues 206–218 (QEERQRGKDRNEN) are compositionally biased toward basic and acidic residues. The segment at 206–228 (QEERQRGKDRNENEVESTSSANE) is disordered. An NR LBD domain is found at 227–458 (NEDMPVERIL…TFLMEMLEAP (232 aa)). At serine 259 the chain carries Phosphoserine. A Phosphoserine; by MAPK8 and MAPK9 modification is found at serine 260. The 9-cis-retinoate site is built by arginine 316 and alanine 327. 2 residues coordinate all-trans-retinoate: arginine 316 and alanine 327. The required for nuclear export stretch occupies residues 348-368 (RVLTELVSKMRDMQMDKTELG).

Belongs to the nuclear hormone receptor family. NR2 subfamily. In terms of assembly, homodimer. Heterodimer (via C-terminus) with RARA; required for ligand-dependent retinoic acid receptor transcriptional activity; association with RARA is enhanced by pulsatile shear stress. Heterodimer with PPARA (via the leucine-like zipper in the LBD); the interaction is required for PPARA transcriptional activity. Heterodimerizes with PPARG. Heterodimerizes (via NR LBD) with RARB. Heterodimerizes with NR1H4; the heterodimerization enhances the binding affinity for LXXLL motifs from coactivators. Interacts with NCOA3 and NCOA6 coactivators. Interacts with coactivator FAM120B. Interacts with coactivator PELP1, SENP6, SFPQ, DNTTIP2 and RNF8. Interacts with PRMT2. Interacts with ASXL1. Interacts with BHLHE40/DEC1, BHLHE41/DEC2, NCOR1 and NCOR2. Interacts in a ligand-dependent fashion with MED1 and NCOA1. Interacts with VDR. Interacts with EP300; the interaction is decreased by 9-cis retinoic acid. Heterodimer (via C-terminus) with NR4A1 (via DNA-binding domain); DNA-binding of the heterodimer is enhanced by 9-cis retinoic acid. NR4A1 competes with EP300 for interaction with RXRA and thereby attenuates EP300 mediated acetylation of RXRA. In the absence of hormonal ligand, interacts with TACC1. Interacts ith IGFBP3. As to quaternary structure, (Microbial infection) Interacts (via the DNA binding domain) with HCV core protein; the interaction enhances the transcriptional activities of the RXRA/RARA and the RXRA/PPARA heterodimers. In terms of processing, acetylated by EP300; acetylation enhances DNA binding and transcriptional activity. Phosphorylated on serine and threonine residues mainly in the N-terminal modulating domain. Constitutively phosphorylated on Ser-21 in the presence or absence of ligand. Under stress conditions, hyperphosphorylated by activated JNK on Ser-56, Ser-70, Thr-82 and Ser-260. Phosphorylated on Ser-27, in vitro, by PKA. This phosphorylation is required for repression of cAMP-mediated transcriptional activity of RARA. Post-translationally, ubiquitinated by UBR5, leading to its degradation: UBR5 specifically recognizes and binds ligand-bound RXRA when it is not associated with coactivators (NCOAs). In presence of NCOAs, the UBR5-degron is not accessible, preventing its ubiquitination and degradation. In terms of processing, sumoylation negatively regulates transcriptional activity. Desumoylated specifically by SENP6. Expressed in lung fibroblasts (at protein level). Expressed in monocytes. Highly expressed in liver, also found in kidney and brain.

Its subcellular location is the nucleus. The protein resides in the cytoplasm. It is found in the mitochondrion. Its function is as follows. Receptor for retinoic acid that acts as a transcription factor. Forms homo- or heterodimers with retinoic acid receptors (RARs) and binds to target response elements in response to their ligands, all-trans or 9-cis retinoic acid, to regulate gene expression in various biological processes. The RAR/RXR heterodimers bind to the retinoic acid response elements (RARE) composed of tandem 5'-AGGTCA-3' sites known as DR1-DR5 to regulate transcription. The high affinity ligand for retinoid X receptors (RXRs) is 9-cis retinoic acid. In the absence of ligand, the RXR-RAR heterodimers associate with a multiprotein complex containing transcription corepressors that induce histone deacetylation, chromatin condensation and transcriptional suppression. On ligand binding, the corepressors dissociate from the receptors and coactivators are recruited leading to transcriptional activation. Serves as a common heterodimeric partner for a number of nuclear receptors, such as RARA, RARB and PPARA. The RXRA/RARB heterodimer can act as a transcriptional repressor or transcriptional activator, depending on the RARE DNA element context. The RXRA/PPARA heterodimer is required for PPARA transcriptional activity on fatty acid oxidation genes such as ACOX1 and the P450 system genes. Together with RARA, positively regulates microRNA-10a expression, thereby inhibiting the GATA6/VCAM1 signaling response to pulsatile shear stress in vascular endothelial cells. Acts as an enhancer of RARA binding to RARE DNA element. May facilitate the nuclear import of heterodimerization partners such as VDR and NR4A1. Promotes myelin debris phagocytosis and remyelination by macrophages. Plays a role in the attenuation of the innate immune system in response to viral infections, possibly by negatively regulating the transcription of antiviral genes such as type I IFN genes. Involved in the regulation of calcium signaling by repressing ITPR2 gene expression, thereby controlling cellular senescence. This chain is Retinoic acid receptor RXR-alpha (RXRA), found in Homo sapiens (Human).